We begin with the raw amino-acid sequence, 260 residues long: Thaumatin-like protein 1 (260 aa).

The signal sequence occupies residues 1-32 (MIITVLHSHVSFYFIILSFLFFHALHLVGSDG). 8 disulfide bridges follow: Cys-41–Cys-255, Cys-89–Cys-100, Cys-105–Cys-112, Cys-166–Cys-245, Cys-171–Cys-228, Cys-179–Cys-191, Cys-195–Cys-204, and Cys-205–Cys-215.

This sequence belongs to the thaumatin family. Expressed only in roots.

In terms of biological role, involved in local responses of roots to colonization by non-pathogenic plant growth-promoting rhizobacteria (PGPR) fluorescent Pseudomonas spp., but seems to not being required for the establishment of subsequent induced systemic resistance (ISR). The sequence is that of Thaumatin-like protein 1 from Arabidopsis thaliana (Mouse-ear cress).